Reading from the N-terminus, the 604-residue chain is MSSDAIRNTEQINAAIKIIENKTERPQSSTTPIDSKASTVAAANSTATETSRDLTQYTLDDGRVVSTNRRIMNKVPAITSHVPTDEELFQPNGIPRHEFLRDHFKREGKLSAAQAARIVTLATELFSKEPNLISVPAPITVCGDIHGQYFDLLKLFEVGGDPATTSYLFLGDYVDRGSFSFECLIYLYSLKLNFNDHFWLLRGNHECKHLTSYFTFKNEMLHKYNLDIYEKCCESFNNLPLAALMNGQYLCVHGGISPELNSLQDINNLNRFREIPSHGLMCDLLWADPIEEYDEVLDKDLTEEDIVNSKTMVPHHGKMAPSRDMFVPNSVRGCSYAFTYRAACHFLQETGLLSIIRAHEAQDAGYRMYKNTKTLGFPSLLTLFSAPNYLDTYNNKAAILKYENNVMNIRQFNMTPHPYWLPDFMDVFTWSLPFVGEKVTEMLVAILNICTEDELENDTPVIEELVGTDKKLPQAGKSEATPQPATSASPKHASILDDEHRRKALRNKILAVAKVSRMYSVLREETNKVQFLKDHNSGVLPRGALSNGVKGLDEALSTFERARKHDLINEKLPPSLDELKNENKKYYEKVWQKVHEHDAKNDSK.

The tract at residues 21 to 48 is disordered; sequence NKTERPQSSTTPIDSKASTVAAANSTAT. Residue Thr31 is modified to Phosphothreonine. The segment covering 35–48 has biased composition (low complexity); that stretch reads SKASTVAAANSTAT. Asp144, His146, and Asp172 together coordinate Fe cation. The Zn(2+) site is built by Asp172 and Asn204. The Proton donor role is filled by His205. Zn(2+) contacts are provided by His253 and His359. The tract at residues 470 to 497 is disordered; sequence KKLPQAGKSEATPQPATSASPKHASILD. Positions 480–489 are enriched in polar residues; the sequence is ATPQPATSAS. A phosphoserine mark is found at Ser489 and Ser520. Positions 501–523 are calmodulin-binding; that stretch reads RRKALRNKILAVAKVSRMYSVLR.

The protein belongs to the PPP phosphatase family. PP-2B subfamily. Composed of two components (A and B), the A component is the catalytic subunit and the B component confers calcium sensitivity. Fe(3+) serves as cofactor. It depends on Zn(2+) as a cofactor.

The catalysed reaction is O-phospho-L-seryl-[protein] + H2O = L-seryl-[protein] + phosphate. It carries out the reaction O-phospho-L-threonyl-[protein] + H2O = L-threonyl-[protein] + phosphate. Its function is as follows. Calcium-dependent, calmodulin-stimulated protein phosphatase. This subunit may have a role in the calmodulin activation of calcineurin. The protein is Serine/threonine-protein phosphatase 2B catalytic subunit A2 (CMP2) of Saccharomyces cerevisiae (strain ATCC 204508 / S288c) (Baker's yeast).